The chain runs to 256 residues: Probable aquaporin TIP4-2 (256 aa).

A run of 5 helical transmembrane segments spans residues 25–45 (AVAG…ASTI), 59–79 (AVTA…TAGF), 86–108 (LNPA…SALY), 146–166 (GVAA…ATIL), and 178–198 (PLLT…LTGA). An NPA 1 motif is present at residues 87 to 89 (NPA). The NPA 2 motif lies at 201-203 (NPA). A helical membrane pass occupies residues 220–240 (VYWVGPLAGGPLAVVAYELLF).

This sequence belongs to the MIP/aquaporin (TC 1.A.8) family. TIP (TC 1.A.8.10) subfamily. In terms of tissue distribution, expressed in roots, leaves and anthers.

It is found in the vacuole membrane. In terms of biological role, aquaporins facilitate the transport of water and small neutral solutes across cell membranes. May be involved in transport from the vacuolar compartment to the cytoplasm. The sequence is that of Probable aquaporin TIP4-2 (TIP4-2) from Oryza sativa subsp. japonica (Rice).